The primary structure comprises 410 residues: Mating-type locus allele B5 protein (410 aa).

The tract at residues 1-110 (MSSDPNFSLT…FNVVSPAVVC (110 aa)) is variable domain between B alleles. Positions 107–184 (AVVCRNLSED…NARRRSGWSH (78 aa)) form a DNA-binding region, homeobox; TALE-type. Residues 111–410 (RNLSEDLPAY…PFLCLSVAFV (300 aa)) are highly conserved between B alleles. Disordered stretches follow at residues 201 to 241 (VRAK…TPAD), 275 to 336 (NKKT…PELS), and 366 to 395 (ILQS…PDEV). The segment covering 206 to 222 (SSSNQSTPPSPTSEYPS) has biased composition (low complexity). The Nuclear localization signal signature appears at 276–308 (KKTPKPGMPRPVTTVTKRQPARKTKPAAKPKSR). Residues 294–307 (QPARKTKPAAKPKS) are compositionally biased toward basic residues. The span at 312–336 (PRASTTPSIDSTLDSSKLESTPELS) shows a compositional bias: polar residues. Residues 333 to 410 (PELSMCSTAD…PFLCLSVAFV (78 aa)) form a not essential for B5 function region. The span at 375–388 (RGNRKVKALPKRAG) shows a compositional bias: basic residues.

Belongs to the TALE/M-ATYP homeobox family.

Its subcellular location is the nucleus. Its function is as follows. The B locus has at least 25 alleles, and any combination of two different B alleles yields a multimeric regulatory protein, that activates genes responsible for the pathogenicity and for the sexual development of the fungus within the corn plant. The protein is Mating-type locus allele B5 protein of Mycosarcoma maydis (Corn smut fungus).